The sequence spans 480 residues: UDP-glucose 6-dehydrogenase 5 (480 aa).

Residues 8 to 13 (GAGYVG), Asp33, Arg38, 86 to 90 (VNTPT), 127 to 128 (ST), and Glu161 each bind NAD(+). Substrate-binding positions include 157-161 (EFLAE), 216-223 (KLAANAFL), and 256-269 (RIGP…VGFG). Residue Cys272 is the Nucleophile of the active site. Residue 272–275 (CFQK) participates in NAD(+) binding. 334 to 335 (FK) is a binding site for substrate. Residue Arg342 coordinates NAD(+). Ser393 carries the phosphoserine modification. Arg447 is a binding site for substrate.

The protein belongs to the UDP-glucose/GDP-mannose dehydrogenase family.

The enzyme catalyses UDP-alpha-D-glucose + 2 NAD(+) + H2O = UDP-alpha-D-glucuronate + 2 NADH + 3 H(+). It participates in nucleotide-sugar biosynthesis; UDP-alpha-D-glucuronate biosynthesis; UDP-alpha-D-glucuronate from UDP-alpha-D-glucose: step 1/1. Involved in the biosynthesis of UDP-glucuronic acid (UDP-GlcA), providing nucleotide sugars for cell-wall polymers. The sequence is that of UDP-glucose 6-dehydrogenase 5 (UGD5) from Oryza sativa subsp. japonica (Rice).